We begin with the raw amino-acid sequence, 305 residues long: Coenzyme PQQ synthesis protein B (305 aa).

This sequence belongs to the PqqB family.

It participates in cofactor biosynthesis; pyrroloquinoline quinone biosynthesis. Functionally, may be involved in the transport of PQQ or its precursor to the periplasm. The sequence is that of Coenzyme PQQ synthesis protein B from Cupriavidus necator (strain ATCC 17699 / DSM 428 / KCTC 22496 / NCIMB 10442 / H16 / Stanier 337) (Ralstonia eutropha).